A 145-amino-acid chain; its full sequence is Small ribosomal subunit protein eS19 (145 aa).

At lysine 23 the chain carries N6-acetyllysine. Arginine 67 carries the omega-N-methylarginine modification. 2 positions are modified to N6-acetyllysine: lysine 111 and lysine 115. The residue at position 143 (lysine 143) is an N6-succinyllysine.

This sequence belongs to the eukaryotic ribosomal protein eS19 family. Component of the small ribosomal subunit. Part of the small subunit (SSU) processome, composed of more than 70 proteins and the RNA chaperone small nucleolar RNA (snoRNA) U3. Interacts with RPS19BP1; the interaction is direct and mediates the integration of RPS19 in state post-A1. Interacts with RPS19BP1.

It localises to the cytoplasm. The protein localises to the nucleus. It is found in the nucleolus. Component of the small ribosomal subunit. The ribosome is a large ribonucleoprotein complex responsible for the synthesis of proteins in the cell. Required for pre-rRNA processing and maturation of 40S ribosomal subunits. Part of the small subunit (SSU) processome, first precursor of the small eukaryotic ribosomal subunit. During the assembly of the SSU processome in the nucleolus, many ribosome biogenesis factors, an RNA chaperone and ribosomal proteins associate with the nascent pre-rRNA and work in concert to generate RNA folding, modifications, rearrangements and cleavage as well as targeted degradation of pre-ribosomal RNA by the RNA exosome. The polypeptide is Small ribosomal subunit protein eS19 (RPS19) (Oryctolagus cuniculus (Rabbit)).